A 357-amino-acid chain; its full sequence is Tetraacyldisaccharide 4'-kinase (357 aa).

49–56 (TIGGTGKT) serves as a coordination point for ATP.

It belongs to the LpxK family.

It catalyses the reaction a lipid A disaccharide + ATP = a lipid IVA + ADP + H(+). It functions in the pathway glycolipid biosynthesis; lipid IV(A) biosynthesis; lipid IV(A) from (3R)-3-hydroxytetradecanoyl-[acyl-carrier-protein] and UDP-N-acetyl-alpha-D-glucosamine: step 6/6. Transfers the gamma-phosphate of ATP to the 4'-position of a tetraacyldisaccharide 1-phosphate intermediate (termed DS-1-P) to form tetraacyldisaccharide 1,4'-bis-phosphate (lipid IVA). The polypeptide is Tetraacyldisaccharide 4'-kinase (Porphyromonas gingivalis (strain ATCC 33277 / DSM 20709 / CIP 103683 / JCM 12257 / NCTC 11834 / 2561)).